We begin with the raw amino-acid sequence, 540 residues long: Chaperonin GroEL 3 (540 aa).

ATP is bound by residues 30–33 (TLGP), Lys51, 87–91 (DGTTT), Gly415, 479–481 (NAA), and Asp495.

This sequence belongs to the chaperonin (HSP60) family. In terms of assembly, forms a cylinder of 14 subunits composed of two heptameric rings stacked back-to-back. Interacts with the co-chaperonin GroES.

The protein localises to the cytoplasm. The enzyme catalyses ATP + H2O + a folded polypeptide = ADP + phosphate + an unfolded polypeptide.. In terms of biological role, together with its co-chaperonin GroES, plays an essential role in assisting protein folding. The GroEL-GroES system forms a nano-cage that allows encapsulation of the non-native substrate proteins and provides a physical environment optimized to promote and accelerate protein folding. This Burkholderia cenocepacia (strain HI2424) protein is Chaperonin GroEL 3.